The following is a 970-amino-acid chain: Disks large 1 tumor suppressor protein (970 aa).

An L27 domain is found at 4–64; that stretch reads KKQEAHRALE…FYELTLLDDS (61 aa). A disordered region spans residues 161 to 209; the sequence is TENAKEPTVEQQQKQQQAQQRSSRSPQQQNPQQQQGSKSRSGSQTVNGD. Residues 171–204 show a composition bias toward low complexity; it reads QQQKQQQAQQRSSRSPQQQNPQQQQGSKSRSGSQ. PDZ domains are found at residues 216–303 and 330–421; these read DIQL…KRKR and EIDL…GKTQ. Residues 424–477 form a disordered region; it reads TTSASGGGGGGLSSGQQLSQSQSQLATSQSQSQVHQQQHATPMVNSQSTEPGSR. Residues 437–462 show a composition bias toward low complexity; it reads SGQQLSQSQSQLATSQSQSQVHQQQH. The segment covering 466–477 has biased composition (polar residues); sequence MVNSQSTEPGSR. Ser496 bears the Phosphoserine mark. In terms of domain architecture, PDZ 3 spans 506 to 587; the sequence is TITIQKGPQG…VVTLLAQYRP (82 aa). In terms of domain architecture, SH3 spans 620 to 690; sequence KRSLYVRALF…PSKRRWERKM (71 aa). Thr714 is subject to Phosphothreonine. The Guanylate kinase-like domain maps to 780–955; it reads TRPVIILGPL…IYSKVKSMIW (176 aa).

Belongs to the MAGUK family. As to expression, during the cellular blastoderm stage, isoform B, isoform F, isoform H, isoform I and isoform L expression is localized to the cell borders. From stage 11 onwards, expression is found predominantly in the developing nervous system: axon bundles in the ventral cord and the brain. Stage 14 and 15 embryos exhibit expression in the developing body wall muscle. Expression in neuropil regions of the CNS and at NMJs persists through to larval development. Other isoforms show expression in embryonic epithelial cells. In larvae, expression is seen as a belt around salivary glands, imaginal disks and proventriculus. Expressed in adult reproductive tissues. In epithelia, coexpressed with scrib throughout development.

It is found in the cytoplasm. Its subcellular location is the cell membrane. The protein localises to the basolateral cell membrane. The protein resides in the cytoskeleton. It localises to the cell junction. It is found in the septate junction. Functionally, during embryonic development, some isoforms are essential for proper neuronal differentiation and organization. Required for cell polarity; maintenance of apicobasal polarity. Plays a critical role at septate junctions in cellular growth control during larval development. The presence of a guanylate kinase domain suggests involvement in cellular adhesion as well as signal transduction to control cellular proliferation. This Drosophila melanogaster (Fruit fly) protein is Disks large 1 tumor suppressor protein (dlg1).